A 198-amino-acid polypeptide reads, in one-letter code: Recombination protein RecR (198 aa).

The C4-type zinc-finger motif lies at 58-73 (CSICGNYTDSDPCAIC). One can recognise a Toprim domain in the interval 81–175 (SIICVIEQPK…KVTRIAHGVP (95 aa)).

Belongs to the RecR family.

Its function is as follows. May play a role in DNA repair. It seems to be involved in an RecBC-independent recombinational process of DNA repair. It may act with RecF and RecO. This is Recombination protein RecR from Clostridium novyi (strain NT).